The sequence spans 226 residues: PDGF-related-transforming protein sis (226 aa).

The span at Arg-201–His-215 shows a compositional bias: basic residues. A disordered region spans residues Arg-201 to Ala-226.

It belongs to the PDGF/VEGF growth factor family.

This is PDGF-related-transforming protein sis (V-SIS) from Woolly monkey sarcoma virus (WMSV).